Reading from the N-terminus, the 382-residue chain is Glycerate kinase (382 aa).

It belongs to the glycerate kinase type-1 family.

It carries out the reaction (R)-glycerate + ATP = (2R)-3-phosphoglycerate + ADP + H(+). This chain is Glycerate kinase (glxK), found in Bacillus subtilis (strain 168).